The primary structure comprises 882 residues: Alanine--tRNA ligase (882 aa).

4 residues coordinate Zn(2+): His563, His567, Cys665, and His669.

The protein belongs to the class-II aminoacyl-tRNA synthetase family. The cofactor is Zn(2+).

It is found in the cytoplasm. It catalyses the reaction tRNA(Ala) + L-alanine + ATP = L-alanyl-tRNA(Ala) + AMP + diphosphate. Catalyzes the attachment of alanine to tRNA(Ala) in a two-step reaction: alanine is first activated by ATP to form Ala-AMP and then transferred to the acceptor end of tRNA(Ala). Also edits incorrectly charged Ser-tRNA(Ala) and Gly-tRNA(Ala) via its editing domain. The sequence is that of Alanine--tRNA ligase from Synechococcus sp. (strain RCC307).